The chain runs to 159 residues: Protein-export protein SecB (159 aa).

This sequence belongs to the SecB family. Homotetramer, a dimer of dimers. One homotetramer interacts with 1 SecA dimer.

It is found in the cytoplasm. In terms of biological role, one of the proteins required for the normal export of preproteins out of the cell cytoplasm. It is a molecular chaperone that binds to a subset of precursor proteins, maintaining them in a translocation-competent state. It also specifically binds to its receptor SecA. This is Protein-export protein SecB from Aromatoleum aromaticum (strain DSM 19018 / LMG 30748 / EbN1) (Azoarcus sp. (strain EbN1)).